The primary structure comprises 137 residues: Large ribosomal subunit protein uL22c (137 aa).

This sequence belongs to the universal ribosomal protein uL22 family. As to quaternary structure, part of the 50S ribosomal subunit.

It localises to the plastid. It is found in the chloroplast. Functionally, this protein binds specifically to 23S rRNA. Its function is as follows. The globular domain of the protein is located near the polypeptide exit tunnel on the outside of the subunit, while an extended beta-hairpin is found that lines the wall of the exit tunnel in the center of the 70S ribosome. The polypeptide is Large ribosomal subunit protein uL22c (rpl22) (Oenothera argillicola (Appalachian evening primrose)).